The following is a 503-amino-acid chain: Probable voltage-gated potassium channel subunit kvs-4 (503 aa).

Residues 1 to 231 (MNSAIMQGAA…EPASSGKAQA (231 aa)) lie on the Cytoplasmic side of the membrane. The short motif at 217–219 (WNI) is the Required for dendritic localization element. A helical transmembrane segment spans residues 232–252 (FAVCSVVFVLISISGLVLGSL). Topologically, residues 253-275 (PELQVATKQRNNLTGEEFTEMEP) are extracellular. The N-linked (GlcNAc...) asparagine glycan is linked to asparagine 264. A helical transmembrane segment spans residues 276–296 (MPILGYIEYVCIVWFTMEYGL). Topologically, residues 297-313 (KMLVSAERSKTFRQLLN) are cytoplasmic. A helical membrane pass occupies residues 314–334 (IIDLLAILPFIIEMLLLIFGI). Over 335-346 (STEQLRDLKGAF) the chain is Extracellular. The chain crosses the membrane as a helical; Voltage-sensor span at residues 347 to 366 (LVIRILRVLRVIRVLKLGRY). Topologically, residues 367–383 (SSGLQMFGKTLKASFRQ) are cytoplasmic. The S4-S5 linker stretch occupies residues 368–383 (SGLQMFGKTLKASFRQ). A helical membrane pass occupies residues 384-404 (LGMMAMVVMTGVIFFSTLVYF). Over 405 to 417 (LEKDEPASKFHSI) the chain is Extracellular. The segment at residues 418–429 (PAACWWCIVTMT) is an intramembrane region (helical). Residues 430–434 (TVGYG) lie within the membrane without spanning it. A Selectivity filter motif is present at residues 430–435 (TVGYGD). The Extracellular portion of the chain corresponds to 435-445 (DLTPVTVPGKL). Residues 446 to 466 (VATGAIACGVLVLALPITIIV) traverse the membrane as a helical segment. At 467–503 (DNFMKVAETERPAGGNRYRTSQYPKATKSEQMILKVT) the chain is on the cytoplasmic side. The short motif at 496-500 (EQMIL) is the Required for dendritic localization element.

The protein belongs to the potassium channel family. B (Shab) (TC 1.A.1.2) subfamily. Kv2.2/KCNB2 sub-subfamily. In terms of assembly, homotetramer or heterotetramer. Interacts with unc-101 (via N-terminus); which targets kvs-4 to dendrites. Expressed in the cholinergic motor neuron DA9, mechanosensory neurons ALM and PLM, and the interneuron PVPL.

Its subcellular location is the cell membrane. The protein resides in the perikaryon. It localises to the cell projection. It is found in the axon. The protein localises to the dendrite. Its function is as follows. Voltage-gated potassium channel that mediates transmembrane potassium transport in excitable membranes. In Caenorhabditis elegans, this protein is Probable voltage-gated potassium channel subunit kvs-4.